We begin with the raw amino-acid sequence, 262 residues long: Tropinone reductase homolog At2g29310 (262 aa).

13 to 37 (LVTGAASGIGYAIVEELASFGAIIH) is an NADP(+) binding site. S146 lines the substrate pocket. Y159 (proton acceptor) is an active-site residue.

This sequence belongs to the short-chain dehydrogenases/reductases (SDR) family. SDR65C subfamily.

This chain is Tropinone reductase homolog At2g29310, found in Arabidopsis thaliana (Mouse-ear cress).